The following is a 642-amino-acid chain: Bifunctional protein glk (642 aa).

Residues 1–340 form a glucokinase region; sequence MSTGAQSKAA…QLSNRSGGAS (340 aa). Position 23 to 28 (23 to 28) interacts with ATP; sequence ADVGGT. The HTH rpiR-type domain maps to 341-417; it reads SAVFERIRQM…LKLATGLTGT (77 aa). A putative HTH-type transcriptional regulator region spans residues 341–642; it reads SAVFERIRQM…SPAAKDVARD (302 aa). Positions 377–396 form a DNA-binding region, H-T-H motif; it reads IVDIARKADVSQPTVIRFCR. One can recognise an SIS domain in the interval 461-600; it reads AIEILNGARR…AVGVAIRRAS (140 aa). The helical transmembrane segment at 576–596 threads the bilayer; sequence SMISRILHLLMIDILAVGVAI.

In the N-terminal section; belongs to the bacterial glucokinase family.

Its subcellular location is the membrane. The enzyme catalyses D-glucose + ATP = D-glucose 6-phosphate + ADP + H(+). The chain is Bifunctional protein glk (glk) from Burkholderia lata (strain ATCC 17760 / DSM 23089 / LMG 22485 / NCIMB 9086 / R18194 / 383).